A 108-amino-acid polypeptide reads, in one-letter code: Putative pterin-4-alpha-carbinolamine dehydratase (108 aa).

It belongs to the pterin-4-alpha-carbinolamine dehydratase family.

The catalysed reaction is (4aS,6R)-4a-hydroxy-L-erythro-5,6,7,8-tetrahydrobiopterin = (6R)-L-erythro-6,7-dihydrobiopterin + H2O. The sequence is that of Putative pterin-4-alpha-carbinolamine dehydratase from Bordetella avium (strain 197N).